A 118-amino-acid polypeptide reads, in one-letter code: Large ribosomal subunit protein bL20 (118 aa).

It belongs to the bacterial ribosomal protein bL20 family.

Binds directly to 23S ribosomal RNA and is necessary for the in vitro assembly process of the 50S ribosomal subunit. It is not involved in the protein synthesizing functions of that subunit. This Psychromonas ingrahamii (strain DSM 17664 / CCUG 51855 / 37) protein is Large ribosomal subunit protein bL20.